A 366-amino-acid chain; its full sequence is Ribosomal RNA large subunit methyltransferase M (366 aa).

S-adenosyl-L-methionine-binding positions include Ser-188, 221–224 (CPGG), Asp-240, Asp-260, and Asp-277. The active-site Proton acceptor is the Lys-306.

It belongs to the class I-like SAM-binding methyltransferase superfamily. RNA methyltransferase RlmE family. RlmM subfamily. As to quaternary structure, monomer.

Its subcellular location is the cytoplasm. It carries out the reaction cytidine(2498) in 23S rRNA + S-adenosyl-L-methionine = 2'-O-methylcytidine(2498) in 23S rRNA + S-adenosyl-L-homocysteine + H(+). In terms of biological role, catalyzes the 2'-O-methylation at nucleotide C2498 in 23S rRNA. This Escherichia fergusonii (strain ATCC 35469 / DSM 13698 / CCUG 18766 / IAM 14443 / JCM 21226 / LMG 7866 / NBRC 102419 / NCTC 12128 / CDC 0568-73) protein is Ribosomal RNA large subunit methyltransferase M.